Here is a 676-residue protein sequence, read N- to C-terminus: Beta-taxilin (676 aa).

Disordered stretches follow at residues 1 to 55 (MEND…DISE) and 71 to 131 (AASL…EQKL). Composition is skewed to polar residues over residues 8-25 (EKQQ…QGQS) and 34-45 (QPLSPTNQTSAQ). Residues 75 to 92 (VEKEGTTAETDKPEKEDV) are compositionally biased toward basic and acidic residues. The segment covering 93–105 (GSMEDAECEDVNE) has biased composition (acidic residues). Residues 106–131 (ESEKDKPAPGDASRAKEPSASKEQKL) are compositionally biased toward basic and acidic residues. Positions 157–461 (EEKLDLLFKK…LYRKIKQAQL (305 aa)) form a coiled coil. A disordered region spans residues 464-486 (EVNGNDILEEDDDANTNPSSSEQ).

It belongs to the taxilin family. Specifically expressed in skeletal and cardiac muscle.

The protein localises to the cytoplasm. Its function is as follows. Promotes neurite-outgrowth. May be involved in intracellular vesicle traffic. In Gallus gallus (Chicken), this protein is Beta-taxilin (TXLNB).